A 444-amino-acid chain; its full sequence is Pre-mRNA-splicing factor cwc25 (444 aa).

Disordered regions lie at residues methionine 1 to glutamate 27, leucine 168 to aspartate 385, and glutamate 397 to serine 425. Residues asparagine 19 to lysine 65 are a coiled coil. A compositionally biased stretch (basic residues) spans glutamine 186–aspartate 199. Composition is skewed to basic and acidic residues over residues arginine 200–arginine 220 and aspartate 228–serine 281. Over residues arginine 282 to serine 293 the composition is skewed to basic residues. Basic and acidic residues-rich tracts occupy residues arginine 305 to lysine 344, aspartate 360 to lysine 372, and glutamate 397 to arginine 410. Residues lysine 364–arginine 417 are a coiled coil.

The protein belongs to the CWC25 family. Associated with the spliceosome.

Its subcellular location is the nucleus. In terms of biological role, involved in pre-mRNA splicing. In Neurospora crassa (strain ATCC 24698 / 74-OR23-1A / CBS 708.71 / DSM 1257 / FGSC 987), this protein is Pre-mRNA-splicing factor cwc25 (msp-6).